Here is a 534-residue protein sequence, read N- to C-terminus: Nitrate/nitrite transporter NrtP (534 aa).

Helical transmembrane passes span 19–39 (WFAF…ATTI), 52–72 (TIGL…GMLL), 79–99 (LTYS…ATAQ), 109–129 (LLMG…AEWF), 150–170 (AFSA…PGAF), 195–215 (AAIA…YFSV), 240–260 (DFWF…VLAW), 266–286 (NFLN…LYLF), 382–404 (WTMV…VAGT), 409–431 (IAVL…TFAI), 445–465 (GNVG…LLLL), and 485–505 (GFFQ…AFFL).

It belongs to the major facilitator superfamily. Nitrate/nitrite porter (TC 2.A.1.8) family.

It localises to the cell inner membrane. Its function is as follows. High-efficiency transport system for both nitrate and nitrite. The sequence is that of Nitrate/nitrite transporter NrtP from Picosynechococcus sp. (strain ATCC 27264 / PCC 7002 / PR-6) (Agmenellum quadruplicatum).